We begin with the raw amino-acid sequence, 202 residues long: FMN-dependent NADH:quinone oxidoreductase (202 aa).

Residues Ser10, 16–18 (SAS), and 96–99 (MWNF) contribute to the FMN site.

The protein belongs to the azoreductase type 1 family. In terms of assembly, homodimer. The cofactor is FMN.

It catalyses the reaction 2 a quinone + NADH + H(+) = 2 a 1,4-benzosemiquinone + NAD(+). It carries out the reaction N,N-dimethyl-1,4-phenylenediamine + anthranilate + 2 NAD(+) = 2-(4-dimethylaminophenyl)diazenylbenzoate + 2 NADH + 2 H(+). Its function is as follows. Quinone reductase that provides resistance to thiol-specific stress caused by electrophilic quinones. Also exhibits azoreductase activity. Catalyzes the reductive cleavage of the azo bond in aromatic azo compounds to the corresponding amines. The sequence is that of FMN-dependent NADH:quinone oxidoreductase from Beijerinckia indica subsp. indica (strain ATCC 9039 / DSM 1715 / NCIMB 8712).